The primary structure comprises 300 residues: Ribosomal RNA small subunit methyltransferase H (300 aa).

S-adenosyl-L-methionine contacts are provided by residues 43-45, Asp-60, Asp-105, and Gln-112; that span reads AGH.

Belongs to the methyltransferase superfamily. RsmH family.

The protein resides in the cytoplasm. It carries out the reaction cytidine(1402) in 16S rRNA + S-adenosyl-L-methionine = N(4)-methylcytidine(1402) in 16S rRNA + S-adenosyl-L-homocysteine + H(+). Its function is as follows. Specifically methylates the N4 position of cytidine in position 1402 (C1402) of 16S rRNA. This Deinococcus deserti (strain DSM 17065 / CIP 109153 / LMG 22923 / VCD115) protein is Ribosomal RNA small subunit methyltransferase H.